We begin with the raw amino-acid sequence, 219 residues long: Ribosome maturation factor RimP (219 aa).

The segment at 195–219 (EGRIPGDDLGAEPEDVASTETQEKK) is disordered.

It belongs to the RimP family.

The protein localises to the cytoplasm. Functionally, required for maturation of 30S ribosomal subunits. The chain is Ribosome maturation factor RimP from Brucella abortus (strain S19).